Here is a 429-residue protein sequence, read N- to C-terminus: Tyrosine--tRNA ligase (429 aa).

Y36 is a binding site for L-tyrosine. Residues 41–50 carry the 'HIGH' region motif; the sequence is PTAASLHAGH. The L-tyrosine site is built by Y171 and Q175. Positions 231 to 235 match the 'KMSKS' region motif; sequence KFGKS. Residue K234 participates in ATP binding. Positions 360–417 constitute an S4 RNA-binding domain; the sequence is ATIVDLLVATGLAESRGAARRTVNEGGAAVNNQKIADPDWTPADGDYLHGRWLVVRRG.

It belongs to the class-I aminoacyl-tRNA synthetase family. TyrS type 1 subfamily. As to quaternary structure, homodimer.

It localises to the cytoplasm. The catalysed reaction is tRNA(Tyr) + L-tyrosine + ATP = L-tyrosyl-tRNA(Tyr) + AMP + diphosphate + H(+). Functionally, catalyzes the attachment of tyrosine to tRNA(Tyr) in a two-step reaction: tyrosine is first activated by ATP to form Tyr-AMP and then transferred to the acceptor end of tRNA(Tyr). The polypeptide is Tyrosine--tRNA ligase (Nocardia farcinica (strain IFM 10152)).